A 591-amino-acid polypeptide reads, in one-letter code: Aspartate--tRNA(Asp/Asn) ligase (591 aa).

L-aspartate is bound at residue glutamate 176. The aspartate stretch occupies residues 200–203 (QLFK). Arginine 222 lines the L-aspartate pocket. ATP is bound by residues 222 to 224 (RDE) and glutamine 231. Histidine 450 provides a ligand contact to L-aspartate. Glutamate 484 serves as a coordination point for ATP. Residue arginine 491 coordinates L-aspartate. 536–539 (GLDR) lines the ATP pocket.

It belongs to the class-II aminoacyl-tRNA synthetase family. Type 1 subfamily. Homodimer.

The protein resides in the cytoplasm. The catalysed reaction is tRNA(Asx) + L-aspartate + ATP = L-aspartyl-tRNA(Asx) + AMP + diphosphate. Aspartyl-tRNA synthetase with relaxed tRNA specificity since it is able to aspartylate not only its cognate tRNA(Asp) but also tRNA(Asn). Reaction proceeds in two steps: L-aspartate is first activated by ATP to form Asp-AMP and then transferred to the acceptor end of tRNA(Asp/Asn). The chain is Aspartate--tRNA(Asp/Asn) ligase from Bacillus cereus (strain B4264).